Reading from the N-terminus, the 333-residue chain is GTP 3',8-cyclase (333 aa).

One can recognise a Radical SAM core domain in the interval 7 to 221; the sequence is KFGRVHDYIR…FEACNEAGYE (215 aa). R16 provides a ligand contact to GTP. 2 residues coordinate [4Fe-4S] cluster: C23 and C27. Y29 serves as a coordination point for S-adenosyl-L-methionine. C30 contributes to the [4Fe-4S] cluster binding site. Position 66 (R66) interacts with GTP. G70 provides a ligand contact to S-adenosyl-L-methionine. T97 serves as a coordination point for GTP. Residue S121 participates in S-adenosyl-L-methionine binding. Position 158 (K158) interacts with GTP. M192 contributes to the S-adenosyl-L-methionine binding site. Residues C257 and C260 each coordinate [4Fe-4S] cluster. 262–264 provides a ligand contact to GTP; the sequence is RLR. C274 is a binding site for [4Fe-4S] cluster.

It belongs to the radical SAM superfamily. MoaA family. Monomer and homodimer. It depends on [4Fe-4S] cluster as a cofactor.

It carries out the reaction GTP + AH2 + S-adenosyl-L-methionine = (8S)-3',8-cyclo-7,8-dihydroguanosine 5'-triphosphate + 5'-deoxyadenosine + L-methionine + A + H(+). The protein operates within cofactor biosynthesis; molybdopterin biosynthesis. Its function is as follows. Catalyzes the cyclization of GTP to (8S)-3',8-cyclo-7,8-dihydroguanosine 5'-triphosphate. In Listeria monocytogenes serotype 4b (strain CLIP80459), this protein is GTP 3',8-cyclase.